The sequence spans 419 residues: UDP-N-acetylglucosamine 1-carboxyvinyltransferase (419 aa).

22–23 (KN) serves as a coordination point for phosphoenolpyruvate. Residue Arg-91 coordinates UDP-N-acetyl-alpha-D-glucosamine. Cys-115 functions as the Proton donor in the catalytic mechanism. Cys-115 carries the 2-(S-cysteinyl)pyruvic acid O-phosphothioketal modification. UDP-N-acetyl-alpha-D-glucosamine contacts are provided by residues 120–124 (RPVDL), 160–163 (KVSV), Asp-305, and Val-327.

This sequence belongs to the EPSP synthase family. MurA subfamily.

The protein localises to the cytoplasm. The catalysed reaction is phosphoenolpyruvate + UDP-N-acetyl-alpha-D-glucosamine = UDP-N-acetyl-3-O-(1-carboxyvinyl)-alpha-D-glucosamine + phosphate. The protein operates within cell wall biogenesis; peptidoglycan biosynthesis. Functionally, cell wall formation. Adds enolpyruvyl to UDP-N-acetylglucosamine. The protein is UDP-N-acetylglucosamine 1-carboxyvinyltransferase of Salmonella arizonae (strain ATCC BAA-731 / CDC346-86 / RSK2980).